A 62-amino-acid polypeptide reads, in one-letter code: Large ribosomal subunit protein uL30 (62 aa).

It belongs to the universal ribosomal protein uL30 family. As to quaternary structure, part of the 50S ribosomal subunit.

This Shouchella clausii (strain KSM-K16) (Alkalihalobacillus clausii) protein is Large ribosomal subunit protein uL30.